The following is a 427-amino-acid chain: 3-phosphoshikimate 1-carboxyvinyltransferase (427 aa).

Residues Lys22, Ser23, and Arg27 each contribute to the 3-phosphoshikimate site. Lys22 is a binding site for phosphoenolpyruvate. Phosphoenolpyruvate is bound by residues Gly96 and Arg124. The 3-phosphoshikimate site is built by Ser169, Ser170, Gln171, Ser197, Asp313, Asn336, and Lys340. Gln171 lines the phosphoenolpyruvate pocket. The active-site Proton acceptor is the Asp313. The phosphoenolpyruvate site is built by Arg344, Arg386, and Lys411.

Belongs to the EPSP synthase family. In terms of assembly, monomer.

It is found in the cytoplasm. The catalysed reaction is 3-phosphoshikimate + phosphoenolpyruvate = 5-O-(1-carboxyvinyl)-3-phosphoshikimate + phosphate. Its pathway is metabolic intermediate biosynthesis; chorismate biosynthesis; chorismate from D-erythrose 4-phosphate and phosphoenolpyruvate: step 6/7. Its function is as follows. Catalyzes the transfer of the enolpyruvyl moiety of phosphoenolpyruvate (PEP) to the 5-hydroxyl of shikimate-3-phosphate (S3P) to produce enolpyruvyl shikimate-3-phosphate and inorganic phosphate. The chain is 3-phosphoshikimate 1-carboxyvinyltransferase from Escherichia coli O17:K52:H18 (strain UMN026 / ExPEC).